Consider the following 618-residue polypeptide: Camphene synthase, chloroplastic (618 aa).

A chloroplast-targeting transit peptide spans methionine 1 to valine 51. Positions 369, 373, and 521 each coordinate Mg(2+). The short motif at aspartate 369 to aspartate 373 is the DDXXD motif element.

It belongs to the terpene synthase family. Tpsd subfamily. The cofactor is Mg(2+). It depends on Mn(2+) as a cofactor. K(+) serves as cofactor.

The protein localises to the plastid. It is found in the chloroplast. The enzyme catalyses (2E)-geranyl diphosphate = (1S,4R)-camphene + diphosphate. The protein operates within terpene metabolism; oleoresin biosynthesis. Involved in defensive oleoresin formation in conifers in response to insect attack or other injury. Involved in monoterpene (C10) olefins biosynthesis. This Abies grandis (Grand fir) protein is Camphene synthase, chloroplastic (ag6).